A 319-amino-acid chain; its full sequence is ATP-dependent 6-phosphofructokinase (319 aa).

Glycine 11 is an ATP binding site. 21–25 (RAVVR) contacts ADP. ATP-binding positions include 72-73 (RC) and 102-105 (GDGS). Aspartate 103 lines the Mg(2+) pocket. A substrate-binding site is contributed by 125-127 (TID). Aspartate 127 serves as the catalytic Proton acceptor. Arginine 154 serves as a coordination point for ADP. Substrate is bound by residues arginine 162 and 169–171 (MGR). ADP is bound by residues 185–187 (GAE), arginine 211, and 213–215 (KKH). Substrate contacts are provided by residues glutamate 222, arginine 243, and 249-252 (HVQR).

The protein belongs to the phosphofructokinase type A (PFKA) family. ATP-dependent PFK group I subfamily. Prokaryotic clade 'B1' sub-subfamily. Homotetramer. Mg(2+) is required as a cofactor.

The protein localises to the cytoplasm. The enzyme catalyses beta-D-fructose 6-phosphate + ATP = beta-D-fructose 1,6-bisphosphate + ADP + H(+). It functions in the pathway carbohydrate degradation; glycolysis; D-glyceraldehyde 3-phosphate and glycerone phosphate from D-glucose: step 3/4. Allosterically activated by ADP and other diphosphonucleosides, and allosterically inhibited by phosphoenolpyruvate. Catalyzes the phosphorylation of D-fructose 6-phosphate to fructose 1,6-bisphosphate by ATP, the first committing step of glycolysis. In Bacillus anthracis (strain A0248), this protein is ATP-dependent 6-phosphofructokinase.